We begin with the raw amino-acid sequence, 687 residues long: Ferric vulnibactin receptor VuuA (687 aa).

A signal peptide spans 1–37; it reads MAALRPARTSVAEKKTFKLHALSAVVMGLCASGQAYA. The TBDR plug domain maps to 63 to 185; it reads TIYDTSSSVQ…SAGAIVMKTN (123 aa). Residues 190–687 enclose the TBDR beta-barrel domain; it reads HFESAVKAGV…MIGASLQLNF (498 aa). The TonB C-terminal box motif lies at 670 to 687; sequence EPLKQQPRMIGASLQLNF.

The protein belongs to the TonB-dependent receptor family.

It localises to the cell outer membrane. Functionally, involved in the uptake of iron in complex with vulnibactin, a catecholate siderophore synthesized by V.vulnificus. Binds and transports ferric vulnibactin across the outer membrane. The energy source is provided by the inner membrane TonB system. This Vibrio vulnificus protein is Ferric vulnibactin receptor VuuA.